The chain runs to 55 residues: Lantibiotic epilancin 15X (55 aa).

A propeptide spans 1–24 (MKKELFDLNLNKDIEAQKSDLNPQ) (cleaved by ElxP). Serine 25 bears the D-lactate; by the dehydratase ElxB and the dehydrogenase ElxO mark. Residue serine 27 is modified to 2,3-didehydroalanine (Ser); by the dehydratase ElxB. A 2,3-didehydrobutyrine; by the dehydratase ElxB mark is found at threonine 31 and threonine 32. A cross-link (lanthionine (Ser-Cys); by the dehydratase ElxB and the cyclase ElxC) is located at residues 36–40 (SKKLC). 2 cross-links (beta-methyllanthionine (Thr-Cys); by the dehydratase ElxB and the cyclase ElxC) span residues 44 to 47 (TLTC) and 46 to 49 (TCGC). Threonine 52 bears the 2,3-didehydrobutyrine; by the dehydratase ElxB mark.

In terms of processing, maturation of this lantibiotic involves the enzymatic conversion of Thr, and Ser into dehydrated AA by ElxB and the formation of thioether bonds with cysteine by the cyclase ElxC. The next steps are cleavage of the leader peptide by ElxP and membrane translocation by ElxT. The leader peptide may be removed before membrane translocation, in contrast to other lantibiotics for which the cleavage occur after translocation. This is suggested by the probable cytoplasmic localization of the serine protease ElxP that cleaves the leader peptide. Post-translationally, the N-terminal D-lactate is probably produced by dehydration of Ser-25 by ElxB, followed by proteolytic removal of the leader peptide by the serine protease ElxP and hydrolysis of the resulting new N-terminal dehydroalanine. This hydrolysis may occur spontaneously. The pyruvate group thus formed is reduced to D-lactate by the NADPH-dependent oxidoreductase ElxO. This N-terminal D-lactate protects the lantibiotic against degradation against aminopeptidase. It is not established whether the 2,3-didehydrobutyrines are the E- or Z-isomers.

In terms of biological role, lanthionine-containing peptide antibiotic (lantibiotic) active on Gram-positive bacteria such as staphylococci, enterococci and streptococci. The bactericidal activity of lantibiotics is based on depolarization of energized bacterial cytoplasmic membranes, initiated by the formation of aqueous transmembrane pores. This is Lantibiotic epilancin 15X from Staphylococcus epidermidis.